We begin with the raw amino-acid sequence, 2603 residues long: Squalestatin tetraketide synthase (2603 aa).

One can recognise a Ketosynthase family 3 (KS3) domain in the interval 29 to 455; that stretch reads TIPIAIIGMS…GANAHVILES (427 aa). Catalysis depends on for beta-ketoacyl synthase activity residues Cys202, His337, and His377. The interval 463 to 512 is disordered; sequence IANGSGRSNGTGNGHNGANGTTNGHNGTNGTTNGHFDATQATNGHYGTDE. The span at 469 to 479 shows a compositional bias: gly residues; it reads RSNGTGNGHNG. Residues 480–497 show a composition bias toward low complexity; the sequence is ANGTTNGHNGTNGTTNGH. Residues 608 to 931 are malonyl-CoA:ACP transacylase (MAT) domain; sequence VFTGQGAQWF…PYISCLLRGQ (324 aa). Residues 1000 to 1138 are N-terminal hotdog fold; it reads HDLLGSLIVG…GRITIEFDTS (139 aa). The PKS/mFAS DH domain maps to 1000 to 1314; that stretch reads HDLLGSLIVG…NQSVGQMAPQ (315 aa). A dehydratase (DH) domain region spans residues 1000–1314; that stretch reads HDLLGSLIVG…NQSVGQMAPQ (315 aa). His1032 (proton acceptor; for dehydratase activity) is an active-site residue. Residues 1157–1314 form a C-terminal hotdog fold region; it reads LMRSVDPSNL…NQSVGQMAPQ (158 aa). The active-site Proton donor; for dehydratase activity is Asp1223. The interval 1465-1665 is methyltransferase (CMet) domain; it reads LYRYYTDAIK…GLDIELRDCD (201 aa). An enoyl reductase (ER) (ER) domain region spans residues 1892 to 2205; the sequence is GLIDTLQFSK…AGKHMGKIVI (314 aa). A ketoreductase (KR) domain region spans residues 2228-2406; the sequence is ASYLIVGGLG…AVSIDLGMVQ (179 aa). One can recognise a Carrier domain in the interval 2516 to 2593; it reads EAIDVVGRAI…ALATTVATKS (78 aa). An O-(pantetheine 4'-phosphoryl)serine modification is found at Ser2553.

Its pathway is secondary metabolite biosynthesis. In terms of biological role, highly reducing polyketide synthase (HR-PKS); part of the gene cluster that mediates the biosynthesis of squalestatin S1 (SQS1, also known as zaragozic acid A), a lead compound for the treatment of hyper-cholesterolemia by targeting squalene synthase (SS). Pks1 is responsible for the biosynthesis of the tetraketide sidechain of SQS1. The biosynthesis must involve 3 rounds of chain extension. After the first and second rounds methyl-transfer occurs, and in all rounds of extension the ketoreductase and dehydratase are active. The enoyl reductase and C-MeT are not active in the final round of extension. In Phoma sp. (strain C2932), this protein is Squalestatin tetraketide synthase.